Consider the following 497-residue polypeptide: Acetyltransferase FGR3 (497 aa).

Residues Asp-221 and Ile-224 each coordinate Ca(2+). Positions 255 and 303 each coordinate CoA. Asp-386 is a Ca(2+) binding site. Thr-396 contacts CoA. Position 462 (Asp-462) interacts with Ca(2+). Residues 477-497 (DASEAKKANGTNGTNGVNGSS) are disordered. The span at 485-497 (NGTNGTNGVNGSS) shows a compositional bias: low complexity.

It belongs to the trichothecene 3-O-acetyltransferase family.

It participates in secondary metabolite biosynthesis. Functionally, acetyltransferase; part of the gene cluster that mediates the biosynthesis of the tetraketides fugralins such as linear fugralin A and cyclic fugralin B, volatile compounds that play a role in the asexual reproductive cycle but are not involved in pathogenicity. One of the key features of fugralins is the presence of a double methyl group, which is only rarely encountered in fungal secondary metabolites. As the fugralins cluster does not contain an independent methyltransferase, the PKS FGR1 is probably responsible for adding two methyl groups to the same carbon atom. Fugralin B is similar to fugralin A except for a cyclization between the carboxylic acid C-8 and the alcohol on C-4 resulting in a six membered lactone ring, probably catalyzed by the cyclase FGR4. The exact role of the individual cluster genes remains unknown and further work is needed to unravel the biosynthetic pathway. This is Acetyltransferase FGR3 from Gibberella zeae (strain ATCC MYA-4620 / CBS 123657 / FGSC 9075 / NRRL 31084 / PH-1) (Wheat head blight fungus).